A 238-amino-acid chain; its full sequence is Calmodulin-binding protein 25 (238 aa).

Residues serine 68 to glycine 78 are compositionally biased toward polar residues. The segment at serine 68–glycine 87 is disordered. A Bipartite nuclear localization signal motif is present at residues lysine 92–arginine 108. The VQ motif lies at phenylalanine 125–glycine 134. Positions serine 201 to alanine 220 are disordered.

As to quaternary structure, interacts with calmodulin (CaM). Interacts with WRKY25 and WRKY51. In terms of tissue distribution, expressed in leaves, flowers and siliques.

Its subcellular location is the nucleus. Its function is as follows. Calmodulin-binding protein that functions as a negative regulator of osmotic stress tolerance. The protein is Calmodulin-binding protein 25 of Arabidopsis thaliana (Mouse-ear cress).